Here is a 250-residue protein sequence, read N- to C-terminus: UDP-2,3-diacylglucosamine hydrolase (250 aa).

Mn(2+) is bound by residues aspartate 7, histidine 9, aspartate 40, asparagine 78, and histidine 113. 78–79 (NR) serves as a coordination point for substrate. Substrate contacts are provided by aspartate 121, serine 159, threonine 163, lysine 166, and histidine 194. 2 residues coordinate Mn(2+): histidine 194 and histidine 196.

This sequence belongs to the LpxH family. It depends on Mn(2+) as a cofactor.

The protein resides in the cell inner membrane. It carries out the reaction UDP-2-N,3-O-bis[(3R)-3-hydroxytetradecanoyl]-alpha-D-glucosamine + H2O = 2-N,3-O-bis[(3R)-3-hydroxytetradecanoyl]-alpha-D-glucosaminyl 1-phosphate + UMP + 2 H(+). It functions in the pathway glycolipid biosynthesis; lipid IV(A) biosynthesis; lipid IV(A) from (3R)-3-hydroxytetradecanoyl-[acyl-carrier-protein] and UDP-N-acetyl-alpha-D-glucosamine: step 4/6. Hydrolyzes the pyrophosphate bond of UDP-2,3-diacylglucosamine to yield 2,3-diacylglucosamine 1-phosphate (lipid X) and UMP by catalyzing the attack of water at the alpha-P atom. Involved in the biosynthesis of lipid A, a phosphorylated glycolipid that anchors the lipopolysaccharide to the outer membrane of the cell. This is UDP-2,3-diacylglucosamine hydrolase from Pseudomonas fluorescens (strain ATCC BAA-477 / NRRL B-23932 / Pf-5).